The following is a 169-amino-acid chain: NAD(P)H-quinone oxidoreductase subunit J, chloroplastic (169 aa).

It belongs to the complex I 30 kDa subunit family. NDH is composed of at least 16 different subunits, 5 of which are encoded in the nucleus.

Its subcellular location is the plastid. The protein localises to the chloroplast thylakoid membrane. It carries out the reaction a plastoquinone + NADH + (n+1) H(+)(in) = a plastoquinol + NAD(+) + n H(+)(out). The enzyme catalyses a plastoquinone + NADPH + (n+1) H(+)(in) = a plastoquinol + NADP(+) + n H(+)(out). NDH shuttles electrons from NAD(P)H:plastoquinone, via FMN and iron-sulfur (Fe-S) centers, to quinones in the photosynthetic chain and possibly in a chloroplast respiratory chain. The immediate electron acceptor for the enzyme in this species is believed to be plastoquinone. Couples the redox reaction to proton translocation, and thus conserves the redox energy in a proton gradient. This chain is NAD(P)H-quinone oxidoreductase subunit J, chloroplastic, found in Zygnema circumcarinatum (Green alga).